The primary structure comprises 137 residues: Lysozyme (137 aa).

An N-terminal signal peptide occupies residues 1 to 20 (MSAVLVLALVLLSLTCVTDA). The I-type lysozyme domain occupies 21 to 134 (ISDACLTCIC…WNAVKNQGCS (114 aa)). 6 disulfides stabilise this stretch: Cys25–Cys102, Cys30–Cys37, Cys42–Cys51, Cys64–Cys84, Cys74–Cys80, and Cys98–Cys116. The active-site Proton donor is the Glu33. Catalysis depends on Asp45, which acts as the Nucleophile. 57–63 (KKSYWID) serves as a coordination point for substrate. Substrate contacts are provided by residues Tyr88 and 109–111 (HNG).

The protein belongs to the glycosyl hydrolase 22 family. Type-I lysozyme subfamily.

It is found in the secreted. The enzyme catalyses Hydrolysis of (1-&gt;4)-beta-linkages between N-acetylmuramic acid and N-acetyl-D-glucosamine residues in a peptidoglycan and between N-acetyl-D-glucosamine residues in chitodextrins.. Has bacteriolytic activity. May play a role in digestion and in the host defense mechanisms against invading microbes. This chain is Lysozyme (lysoz), found in Ostrea edulis (Native oyster).